The chain runs to 192 residues: Xanthine phosphoribosyltransferase (192 aa).

Xanthine is bound by residues Leu-20 and Thr-26. 127 to 131 provides a ligand contact to 5-phospho-alpha-D-ribose 1-diphosphate; the sequence is ANGQA. Residue Lys-155 coordinates xanthine.

Belongs to the purine/pyrimidine phosphoribosyltransferase family. Xpt subfamily. As to quaternary structure, homodimer.

Its subcellular location is the cytoplasm. The catalysed reaction is XMP + diphosphate = xanthine + 5-phospho-alpha-D-ribose 1-diphosphate. It participates in purine metabolism; XMP biosynthesis via salvage pathway; XMP from xanthine: step 1/1. In terms of biological role, converts the preformed base xanthine, a product of nucleic acid breakdown, to xanthosine 5'-monophosphate (XMP), so it can be reused for RNA or DNA synthesis. This Streptococcus thermophilus protein is Xanthine phosphoribosyltransferase.